A 250-amino-acid chain; its full sequence is Trypsin (250 aa).

A signal peptide spans Met1–Ala15. Residues Val16–Arg22 constitute a propeptide, activation peptide. A Peptidase S1 domain is found at Ile23–Glu247. 6 cysteine pairs are disulfide-bonded: Cys29–Cys163, Cys47–Cys63, Cys133–Cys236, Cys140–Cys209, Cys174–Cys188, and Cys199–Cys223. Residues His62 and Asp106 each act as charge relay system in the active site. Ser203 (charge relay system) is an active-site residue.

It belongs to the peptidase S1 family.

It is found in the secreted. Its subcellular location is the extracellular space. The enzyme catalyses Preferential cleavage: Arg-|-Xaa, Lys-|-Xaa.. In Pleuronectes platessa (European plaice), this protein is Trypsin.